Consider the following 404-residue polypeptide: D-galactonate dehydratase family member PC1_0802 (404 aa).

Residues Asn37 and His122 each coordinate substrate. Tyr159 functions as the Proton donor/acceptor in the catalytic mechanism. Mg(2+) is bound at residue Asp212. The active-site Proton donor/acceptor is His214. 2 residues coordinate Mg(2+): Glu238 and Glu264. Substrate-binding residues include Glu264, Arg285, His314, Asp318, and Glu341.

The protein belongs to the mandelate racemase/muconate lactonizing enzyme family. GalD subfamily. Requires Mg(2+) as cofactor.

The enzyme catalyses D-mannonate = 2-dehydro-3-deoxy-D-gluconate + H2O. Its function is as follows. Has low D-mannonate dehydratase activity (in vitro), suggesting that this is not a physiological substrate and that it has no significant role in D-mannonate degradation in vivo. Has no detectable activity with a panel of 70 other acid sugars (in vitro). This chain is D-galactonate dehydratase family member PC1_0802, found in Pectobacterium carotovorum subsp. carotovorum (strain PC1).